A 203-amino-acid chain; its full sequence is Sec-independent protein translocase protein TatB (203 aa).

Residues 1–21 (MFDIGWTELLVIAVVLIVVVG) form a helical membrane-spanning segment. The interval 179 to 203 (KPKRTTAVRKPATLKKPAQTKKDEA) is disordered.

Belongs to the TatB family. In terms of assembly, the Tat system comprises two distinct complexes: a TatABC complex, containing multiple copies of TatA, TatB and TatC subunits, and a separate TatA complex, containing only TatA subunits. Substrates initially bind to the TatABC complex, which probably triggers association of the separate TatA complex to form the active translocon.

It is found in the cell inner membrane. Its function is as follows. Part of the twin-arginine translocation (Tat) system that transports large folded proteins containing a characteristic twin-arginine motif in their signal peptide across membranes. Together with TatC, TatB is part of a receptor directly interacting with Tat signal peptides. TatB may form an oligomeric binding site that transiently accommodates folded Tat precursor proteins before their translocation. In Rhizobium johnstonii (strain DSM 114642 / LMG 32736 / 3841) (Rhizobium leguminosarum bv. viciae), this protein is Sec-independent protein translocase protein TatB.